The sequence spans 341 residues: MGVATTLQPPTTSKTLQKQHLEAVGAYQYVLTFLFMGPFFSLLVFVLLFTSLWPFSVFYLVWLYVDWDTPNQGGRRSEWIRNRAIWRQLRDYYPVKLVKTAELPPDRNYVLGAHPHGIMCTGFLCNFSTESNGFSQLFPGLRPWLAVLAGLFYLPVYRDYIMSFGLCPVSRQSLDFILSQPQLGQAVVIMVGGAHEALYSVPGEHCLTLQKRKGFVRLALRHGASLVPVYSFGENDIFRLKAFATGSWQHWCQLTFKKLMGFSPCIFWGRGLFSATSWGLLPFAVPITTVVGRPIPVPQRLHPTEEEVNHYHALYMTALEQLFEEHKESCGVPASTCLTFI.

2 consecutive transmembrane segments (helical) span residues 29 to 49 (YVLT…VLLF) and 50 to 70 (TSLW…WDTP). A glycan (N-linked (GlcNAc...) asparagine) is linked at asparagine 126. A helical transmembrane segment spans residues 137 to 157 (LFPGLRPWLAVLAGLFYLPVY).

Belongs to the diacylglycerol acyltransferase family. Post-translationally, ubiquitinated. Ubiquitination leads to proteasomal degradation. Selectively expressed in the digestive system. Highly expressed in the ileum, and at lower level in jejunum, duodenum, colon, cecum and the rectum. Not expressed in the stomach and the esophagus and trachea. Expressed at very low level in liver.

The protein localises to the endoplasmic reticulum membrane. It is found in the cytoplasm. The protein resides in the perinuclear region. The catalysed reaction is a 2-acylglycerol + an acyl-CoA = a 1,2-diacylglycerol + CoA. It carries out the reaction an acyl-CoA + a 1,2-diacyl-sn-glycerol = a triacyl-sn-glycerol + CoA. The enzyme catalyses 2-(9Z-octadecenoyl)-glycerol + (9Z)-octadecenoyl-CoA = 1,2-di-(9Z-octadecenoyl)-sn-glycerol + CoA. It catalyses the reaction 2-(9Z-octadecenoyl)-glycerol + hexadecanoyl-CoA = 1-hexadecanoyl-2-(9Z-octadecenoyl)-sn-glycerol + CoA. The catalysed reaction is 1,2-di-(9Z-octadecenoyl)-sn-glycerol + (9Z)-octadecenoyl-CoA = 1,2,3-tri-(9Z-octadecenoyl)-glycerol + CoA. It carries out the reaction 1-hexadecanoyl-2-(9Z-octadecenoyl)-sn-glycerol + hexadecanoyl-CoA = 1,3-dihexadecanoyl-2-(9Z-octadecenoyl)glycerol + CoA. The enzyme catalyses all-trans-retinol + hexadecanoyl-CoA = all-trans-retinyl hexadecanoate + CoA. It catalyses the reaction 1-O-(9Z-octadecenyl)-glycerol + (9Z)-octadecenoyl-CoA = 1-O-(9Z-octadecyl)-3-(9Z-octadecenoyl)-glycerol + CoA. The catalysed reaction is 1-O-(9Z-octadecyl)-3-(9Z-octadecenoyl)-glycerol + (9Z)-octadecenoyl-CoA = 1-O-(9Z-octadecenyl)-2,3-di-(9Z-octadecenoyl)glycerol + CoA. It functions in the pathway glycerolipid metabolism; triacylglycerol biosynthesis. Functionally, catalyzes the formation of diacylglycerol from 2-monoacylglycerol and fatty acyl-CoA. Also able to catalyze the terminal step in triacylglycerol synthesis by using diacylglycerol and fatty acyl-CoA as substrates. Has a preference toward palmitoyl-CoA and oleoyl-CoA. May be involved in absorption of dietary fat in the small intestine by catalyzing the resynthesis of triacylglycerol in enterocytes. Also able to use 1-monoalkylglycerol (1-MAkG) as an acyl acceptor for the synthesis of monoalkyl-monoacylglycerol (MAMAG). This chain is 2-acylglycerol O-acyltransferase 3, found in Homo sapiens (Human).